A 101-amino-acid polypeptide reads, in one-letter code: MEPIDPNLEPWNHPGSQPKTACNNCYCKQCCYHCQLCFTKKGLGISYGRRKRKQRRRTSESSQNHQDPVPKQPLSQPGGIETGQKKSKKEVESQTTSDQFA.

The interval 1–24 is interaction with human CREBBP; that stretch reads MEPIDPNLEPWNHPGSQPKTACNN. The tract at residues 1 to 48 is transactivation; that stretch reads MEPIDPNLEPWNHPGSQPKTACNNCYCKQCCYHCQLCFTKKGLGISYG. Positions 22, 25, and 27 each coordinate Zn(2+). Residues 22–37 are cysteine-rich; sequence CNNCYCKQCCYHCQLC. Lys28 is subject to N6-acetyllysine; by host PCAF. Residues Cys30, His33, Cys34, and Cys37 each contribute to the Zn(2+) site. The segment at 38-48 is core; it reads FTKKGLGISYG. The tract at residues 48-101 is disordered; that stretch reads GRRKRKQRRRTSESSQNHQDPVPKQPLSQPGGIETGQKKSKKEVESQTTSDQFA. The short motif at 49–57 is the Nuclear localization signal, RNA-binding (TAR), and protein transduction element; sequence RRKRKQRRR. The interaction with the host capping enzyme RNGTT stretch occupies residues 49 to 86; sequence RRKRKQRRRTSESSQNHQDPVPKQPLSQPGGIETGQKK. The residue at position 51 (Lys51) is an N6-acetyllysine; by host EP300 and GCN5L2. Arg52 carries the post-translational modification Asymmetric dimethylarginine; by host PRMT6. Lys71 is covalently cross-linked (Glycyl lysine isopeptide (Lys-Gly) (interchain with G-Cter in ubiquitin)).

It belongs to the lentiviruses Tat family. As to quaternary structure, interacts with host CCNT1. Associates with the P-TEFb complex composed at least of Tat, P-TEFb (CDK9 and CCNT1), TAR RNA, RNA Pol II. Recruits the HATs CREBBP, TAF1/TFIID, EP300, PCAF and GCN5L2. Interacts with host KAT5/Tip60; this interaction targets the latter to degradation. Interacts with the host deacetylase SIRT1. Interacts with host capping enzyme RNGTT; this interaction stimulates RNGTT. Binds to host KDR, and to the host integrins ITGAV/ITGB3 and ITGA5/ITGB1. Interacts with host KPNB1/importin beta-1 without previous binding to KPNA1/importin alpha-1. Interacts with EIF2AK2. Interacts with host nucleosome assembly protein NAP1L1; this interaction may be required for the transport of Tat within the nucleus, since the two proteins interact at the nuclear rim. Interacts with host C1QBP/SF2P32; this interaction involves lysine-acetylated Tat. Interacts with the host chemokine receptors CCR2, CCR3 and CXCR4. Interacts with host DPP4/CD26; this interaction may trigger an anti-proliferative effect. Interacts with host LDLR. Interacts with the host extracellular matrix metalloproteinase MMP1. Interacts with host PRMT6; this interaction mediates Tat's methylation. Interacts with, and is ubiquitinated by MDM2/Hdm2. Interacts with host PSMC3 and HTATIP2. Interacts with STAB1; this interaction may overcome SATB1-mediated repression of IL2 and IL2RA (interleukin) in T cells by binding to the same domain than HDAC1. Interacts (when acetylated) with human CDK13, thereby increasing HIV-1 mRNA splicing and promoting the production of the doubly spliced HIV-1 protein Nef. Interacts with host TBP; this interaction modulates the activity of transcriptional pre-initiation complex. Interacts with host RELA. In terms of processing, asymmetrical arginine methylation by host PRMT6 seems to diminish the transactivation capacity of Tat and affects the interaction with host CCNT1. Post-translationally, polyubiquitination by host MDM2 does not target Tat to degradation, but activates its transactivation function and fosters interaction with CCNT1 and TAR RNA. Phosphorylated by EIF2AK2 on serine and threonine residues adjacent to the basic region important for TAR RNA binding and function. Phosphorylation of Tat by EIF2AK2 is dependent on the prior activation of EIF2AK2 by dsRNA.

It is found in the host nucleus. The protein resides in the host nucleolus. It localises to the host cytoplasm. Its subcellular location is the secreted. Functionally, transcriptional activator that increases RNA Pol II processivity, thereby increasing the level of full-length viral transcripts. Recognizes a hairpin structure at the 5'-LTR of the nascent viral mRNAs referred to as the transactivation responsive RNA element (TAR) and recruits the cyclin T1-CDK9 complex (P-TEFb complex) that will in turn hyperphosphorylate the RNA polymerase II to allow efficient elongation. The CDK9 component of P-TEFb and other Tat-activated kinases hyperphosphorylate the C-terminus of RNA Pol II that becomes stabilized and much more processive. Other factors such as HTATSF1/Tat-SF1, SUPT5H/SPT5, and HTATIP2 are also important for Tat's function. Besides its effect on RNA Pol II processivity, Tat induces chromatin remodeling of proviral genes by recruiting the histone acetyltransferases (HATs) CREBBP, EP300 and PCAF to the chromatin. This also contributes to the increase in proviral transcription rate, especially when the provirus integrates in transcriptionally silent region of the host genome. To ensure maximal activation of the LTR, Tat mediates nuclear translocation of NF-kappa-B by interacting with host RELA. Through its interaction with host TBP, Tat may also modulate transcription initiation. Tat can reactivate a latently infected cell by penetrating in it and transactivating its LTR promoter. In the cytoplasm, Tat is thought to act as a translational activator of HIV-1 mRNAs. In terms of biological role, extracellular circulating Tat can be endocytosed by surrounding uninfected cells via the binding to several surface receptors such as CD26, CXCR4, heparan sulfate proteoglycans (HSPG) or LDLR. Neurons are rarely infected, but they internalize Tat via their LDLR. Through its interaction with nuclear HATs, Tat is potentially able to control the acetylation-dependent cellular gene expression. Modulates the expression of many cellular genes involved in cell survival, proliferation or in coding for cytokines or cytokine receptors. Tat plays a role in T-cell and neurons apoptosis. Tat induced neurotoxicity and apoptosis probably contribute to neuroAIDS. Circulating Tat also acts as a chemokine-like and/or growth factor-like molecule that binds to specific receptors on the surface of the cells, affecting many cellular pathways. In the vascular system, Tat binds to ITGAV/ITGB3 and ITGA5/ITGB1 integrins dimers at the surface of endothelial cells and competes with bFGF for heparin-binding sites, leading to an excess of soluble bFGF. This Pan troglodytes (Chimpanzee) protein is Protein Tat.